The sequence spans 379 residues: MTISDVPTQTLPAEGEIGLIDVGSLQLESGAVIDDVCIAVQRWGKLSPARDNVVVVLHALTGDSHITGPAGPGHPTPGWWDGVAGPGAPIDTTRWCAVATNVLGGCRGSTGPSSLARDGKPWGSRFPLISIRDQVQADVAALAALGITEVAAVVGGSMGGARALEWVVGYPDRVRAGLLLAVGARATADQIGTQTTQIAAIKADPDWQSGDYHETGRAPDAGLRLARRFAHLTYRGEIELDTRFANHNQGNEDPTAGGRYAVQSYLEHQGDKLLSRFDAGSYVILTEALNSHDVGRGRGGVSAALRACPVPVVVGGITSDRLYPLRLQQELADLLPGCAGLRVVESVYGHDGFLVETEAVGELIRQTLGLADREGACRR.

The region spanning 52-356 (NVVVVLHALT…VYGHDGFLVE (305 aa)) is the AB hydrolase-1 domain. Ser157 (nucleophile) is an active-site residue. Arg227 is a substrate binding site. Active-site residues include Asp320 and His350. Asp351 serves as a coordination point for substrate.

This sequence belongs to the AB hydrolase superfamily. MetX family. As to quaternary structure, homodimer.

The protein localises to the cytoplasm. The catalysed reaction is L-homoserine + acetyl-CoA = O-acetyl-L-homoserine + CoA. The protein operates within amino-acid biosynthesis; L-methionine biosynthesis via de novo pathway; O-acetyl-L-homoserine from L-homoserine: step 1/1. In terms of biological role, transfers an acetyl group from acetyl-CoA to L-homoserine, forming acetyl-L-homoserine. The polypeptide is Homoserine O-acetyltransferase (Mycobacterium bovis (strain ATCC BAA-935 / AF2122/97)).